The primary structure comprises 119 residues: Large ribosomal subunit protein uL14 (119 aa).

It belongs to the universal ribosomal protein uL14 family. In terms of assembly, part of the 50S ribosomal subunit. Forms a cluster with proteins L3 and L19. In the 70S ribosome, L14 and L19 interact and together make contacts with the 16S rRNA in bridges B5 and B8.

Functionally, binds to 23S rRNA. Forms part of two intersubunit bridges in the 70S ribosome. This is Large ribosomal subunit protein uL14 from Ehrlichia canis (strain Jake).